Consider the following 190-residue polypeptide: FPAMPLSSLFANAVLRAQHLHELAADTYKEFERAYIPEGQRYFLQNAQSTGCFSEVIPTPANKDEAQQRSDVELLRFSLLLIQSWLGPVQFLEKAYANELVFGTSDRVYEKLKDLEEGIQALMRELEDGSPRAGQILKQTYDKFDTNMRSDDALLKNYGLLSCFKKDLHKAETYLRVMKCRRFVESSCAF.

Position 19 (His19) interacts with Zn(2+). Cys52 and Cys163 are oxidised to a cystine. Ser105 carries the phosphoserine modification. Glu172 contacts Zn(2+). An intrachain disulfide couples Cys180 to Cys188.

It belongs to the somatotropin/prolactin family.

The protein localises to the secreted. Plays an important role in growth control. Its major role in stimulating body growth is to stimulate the liver and other tissues to secrete IGF1. It stimulates both the differentiation and proliferation of myoblasts. It also stimulates amino acid uptake and protein synthesis in muscle and other tissues. The polypeptide is Somatotropin (GH1) (Balaenoptera borealis (Sei whale)).